An 837-amino-acid polypeptide reads, in one-letter code: Toll-like receptor 4 (837 aa).

Positions 1–23 are cleaved as a signal peptide; the sequence is MMSASRLAGTLIPAMAFLSCVRP. At 24-629 the chain is on the extracellular side; that stretch reads ESWEPCVVPN…SLNITCQMNK (606 aa). C29 and C38 are joined by a disulfide. An N-linked (GlcNAc...) asparagine glycan is attached at N33. LRR repeat units follow at residues 53-74, 77-98, 101-122, 125-146, and 149-170; these read STKN…SFFS, ELQV…AYQS, HLST…AFSG, SLQK…PIGH, and TLKE…EYFS. Residue N171 is glycosylated (N-linked (GlcNAc...) asparagine). LRR repeat units lie at residues 174-197, 203-223, and 225-245; these read NLEY…RVLH, NLSL…AFKE, and RLHK…KTCI. N-linked (GlcNAc...) asparagine glycosylation occurs at N203. C279 and C304 are oxidised to a cystine. N-linked (GlcNAc...) asparagine glycans are attached at residues N280 and N307. LRR repeat units lie at residues 329–349, 350–371, 372–392, 398–420, 421–442, 446–454, 470–493, 495–516, 519–540, and 543–563; these read GWQH…LKLK, SLKR…VDLP, SLEF…CSQS, SLKY…LGLE, QLEH…SVFL, NLIYLDISH, SLEV…FTEL, NLTF…AFNS, SLQV…PYKC, and SLRV…QELQ. C388 and C389 are disulfide-bonded. N-linked (GlcNAc...) asparagine glycosylation is found at N495 and N524. Residue N573 is glycosylated (N-linked (GlcNAc...) asparagine). In terms of domain architecture, LRRCT spans 577–627; it reads NDFACTCEHQSFLQWIKDQRQLLVEVERMECATPSDKQGMPVLSLNITCQM. 2 disulfides stabilise this stretch: C581–C607 and C583–C625. N-linked (GlcNAc...) asparagine glycosylation is found at N622 and N628. The chain crosses the membrane as a helical span at residues 630–650; sequence TIIGVSVLSVLVVSVVAVLVY. Topologically, residues 651–837 are cytoplasmic; sequence KFYFHLMLLA…GCNWQEATSI (187 aa). The region spanning 670-813 is the TIR domain; it reads NVYDAFVIYS…IFWRRLRKAL (144 aa).

Belongs to the Toll-like receptor family. As to quaternary structure, belongs to the lipopolysaccharide (LPS) receptor, a multi-protein complex containing at least CD14, LY96 and TLR4. Binding to bacterial LPS leads to homodimerization. Interacts with LY96 via the extracellular domain. Interacts with MYD88 and TIRAP via their respective TIR domains. Interacts with TICAM2. Interacts with NOX4. Interacts with CNPY3 and HSP90B1; this interaction is required for proper folding in the endoplasmic reticulum. Interacts with MAP3K21; this interaction leads to negative regulation of TLR4 signaling. Interacts with CD36, following CD36 stimulation by oxLDL or amyloid-beta 42, and forms a heterodimer with TLR6. The trimeric complex is internalized and triggers inflammatory response. LYN kinase activity facilitates TLR4-TLR6 heterodimerization and signal initiation. Interacts with TICAM1 in response to LPS in a WDFY1-dependent manner. Interacts with WDFY1 in response to LPS. Interacts with SMPDL3B. Interacts with CEACAM1; upon lipopolysaccharide stimulation, forms a complex including TLR4 and the phosphorylated form of SYK and CEACAM1, which in turn, recruits PTPN6 that dephosphorylates SYK, reducing the production of reactive oxygen species (ROS) and lysosome disruption, which in turn, reduces the activity of the inflammasome. Interacts with RFTN1; the interaction occurs in response to lipopolysaccharide stimulation. Interacts with SCIMP; the interaction occurs in response to lipopolysaccharide stimulation and is enhanced by phosphorylation of SCIMP by LYN. This interaction facilitates the phosphorylation of TLR4 by LYN which elicits a selective cytokine response in macrophages. Interacts with TRAF3IP3. Interacts with TREM1; this interaction enhances TLR4-mediated inflammatory response. Interacts with ZG16B/PAUF. Interacts with CD82; this interaction inhibits TLR4-mediated signaling pathway. Post-translationally, phosphorylated on tyrosine residues by LYN after binding lipopolysaccharide. In terms of processing, ubiquitinated by RNF128 via 'Lys-28'-linked polyubiquitin chains, leading to proteasomal degradation.

The protein localises to the cell membrane. It localises to the early endosome. Its subcellular location is the cell projection. The protein resides in the ruffle. Transmembrane receptor that functions as a pattern recognition receptor recognizing pathogen- and damage-associated molecular patterns (PAMPs and DAMPs) to induce innate immune responses via downstream signaling pathways. At the plasma membrane, cooperates with LY96 to mediate the innate immune response to bacterial lipopolysaccharide (LPS). Also involved in LPS-independent inflammatory responses triggered by free fatty acids, such as palmitate, and Ni(2+). Mechanistically, acts via MYD88, TIRAP and TRAF6, leading to NF-kappa-B activation, cytokine secretion and the inflammatory response. Alternatively, CD14-mediated TLR4 internalization via endocytosis is associated with the initiation of a MYD88-independent signaling via the TICAM1-TBK1-IRF3 axis leading to type I interferon production. In addition to the secretion of proinflammatory cytokines, initiates the activation of NLRP3 inflammasome and formation of a positive feedback loop between autophagy and NF-kappa-B signaling cascade. In complex with TLR6, promotes inflammation in monocytes/macrophages by associating with TLR6 and the receptor CD86. Upon ligand binding, such as oxLDL or amyloid-beta 42, the TLR4:TLR6 complex is internalized and triggers inflammatory response, leading to NF-kappa-B-dependent production of CXCL1, CXCL2 and CCL9 cytokines, via MYD88 signaling pathway, and CCL5 cytokine, via TICAM1 signaling pathway. In myeloid dendritic cells, vesicular stomatitis virus glycoprotein G but not LPS promotes the activation of IRF7, leading to type I IFN production in a CD14-dependent manner. This chain is Toll-like receptor 4 (TLR4), found in Gorilla gorilla gorilla (Western lowland gorilla).